Consider the following 74-residue polypeptide: Exodeoxyribonuclease 7 small subunit (74 aa).

Belongs to the XseB family. In terms of assembly, heterooligomer composed of large and small subunits.

It is found in the cytoplasm. The catalysed reaction is Exonucleolytic cleavage in either 5'- to 3'- or 3'- to 5'-direction to yield nucleoside 5'-phosphates.. In terms of biological role, bidirectionally degrades single-stranded DNA into large acid-insoluble oligonucleotides, which are then degraded further into small acid-soluble oligonucleotides. The polypeptide is Exodeoxyribonuclease 7 small subunit (Vesicomyosocius okutanii subsp. Calyptogena okutanii (strain HA)).